The chain runs to 548 residues: Folylpolyglutamate synthase (548 aa).

An ATP-binding site is contributed by 130 to 133; it reads GKGS. Residues Ser157, Glu234, and His262 each coordinate Mg(2+). ATP contacts are provided by Arg382 and Asp396.

Belongs to the folylpolyglutamate synthase family. Requires a monovalent cation as cofactor.

The protein resides in the mitochondrion inner membrane. It localises to the mitochondrion matrix. It is found in the cytoplasm. The enzyme catalyses (6S)-5,6,7,8-tetrahydrofolyl-(gamma-L-Glu)(n) + L-glutamate + ATP = (6S)-5,6,7,8-tetrahydrofolyl-(gamma-L-Glu)(n+1) + ADP + phosphate + H(+). The protein operates within cofactor biosynthesis; tetrahydrofolylpolyglutamate biosynthesis. Functionally, catalyzes conversion of folates to polyglutamate derivatives allowing concentration of folate compounds in the cell and the intracellular retention of these cofactors, which are important substrates for most of the folate-dependent enzymes that are involved in one-carbon transfer reactions involved in purine, pyrimidine and amino acid synthesis. Required for methionine synthesis and maintenance of intact mitochondrial DNA. Involved in telomere maintenance. The sequence is that of Folylpolyglutamate synthase from Saccharomyces cerevisiae (strain FostersO) (Baker's yeast).